A 489-amino-acid polypeptide reads, in one-letter code: mRNA cleavage and polyadenylation factor CLP1 (489 aa).

Residues glutamate 28 and tyrosine 152–threonine 157 each bind ATP.

The protein belongs to the Clp1 family. Clp1 subfamily. As to quaternary structure, component of a pre-mRNA cleavage factor complex. Interacts directly with PCF11.

Its subcellular location is the nucleus. In terms of biological role, required for endonucleolytic cleavage during polyadenylation-dependent pre-mRNA 3'-end formation. The chain is mRNA cleavage and polyadenylation factor CLP1 from Candida albicans (strain SC5314 / ATCC MYA-2876) (Yeast).